Reading from the N-terminus, the 369-residue chain is MAVATSVATPVPTPAYSAGRAPAKEKKIYLPDTLAEWPWPRAINPHYAEAKEESQAWAASFNAFSPKAQHAFNRCDFNLLASLAYPLATKHGCRSGCDLMNLFFVIDEYSDIAPVEEVRQQKDIVMDALRNPHKPRPEGEWVGGEVARQFWALTITNASAQSQKHFIETFDEYLDSVVQQAEDRSESRIRDIQSYIDVRRNTIGAKPSFALLELDMDLPDEVLAHPTIQSLSLATIDMLCLGNDIVSYNLEQARGDASHNIITIVMNELNLDVNGAMRWVGDFHKQLEKQFFEAFNNLPKWGNAELDAQIAVYCDGLGNWVRANDQWSFESERYFGARGLEIMETKTLAMMPIQRTEALGPQLVDDSIL.

Residues Asp-107, Asn-243, Ser-247, and Glu-251 each contribute to the Mg(2+) site. The short motif at 107-111 (DEYSD) is the D(D/E)XX(D/E) motif element. The NSE motif motif lies at 243 to 251 (NDIVSYNLE). Residues Arg-333 and Tyr-334 each contribute to the (2E,6E)-farnesyl diphosphate site.

The protein belongs to the terpene synthase family. Requires Mg(2+) as cofactor. The cofactor is Mn(2+). Ca(2+) is required as a cofactor. It depends on Ni(2+) as a cofactor. Co(2+) serves as cofactor.

It catalyses the reaction (2E,6E)-farnesyl diphosphate = Delta(6)-protoilludene + diphosphate. The catalysed reaction is (2E,6E)-farnesyl diphosphate = alpha-selinene + diphosphate. Its activity is regulated as follows. Ca(2+) switches the cyclization mechanism of delta(6)-protoilludene synthase from 1,11 to 1,10 cyclization which leads to the production of beta-elemene. In terms of biological role, terpene cyclase that catalyzes the cyclization of farnesyl diphosphate (FPP) to delta(6)-protoilludene. In presence of Ca(2+), a significant switch from 1,11 to a dual 1,11/1,10 cyclization occurs, producing beta-elemene as the major product, with lower levels of delta(6)-protoilludene and (E)-beta-caryophyllene, and traces of beta-selinene and alpha-selinene. The sequence is that of Delta(6)-protoilludene synthase STEHIDRAFT_73029 from Stereum hirsutum (strain FP-91666) (White-rot fungus).